The sequence spans 326 residues: 4-hydroxy-3-methylbut-2-enyl diphosphate reductase (326 aa).

Cysteine 22 is a binding site for [4Fe-4S] cluster. Histidine 51 and histidine 84 together coordinate (2E)-4-hydroxy-3-methylbut-2-enyl diphosphate. Dimethylallyl diphosphate contacts are provided by histidine 51 and histidine 84. Residues histidine 51 and histidine 84 each coordinate isopentenyl diphosphate. Cysteine 106 is a binding site for [4Fe-4S] cluster. Histidine 134 is a (2E)-4-hydroxy-3-methylbut-2-enyl diphosphate binding site. Residue histidine 134 participates in dimethylallyl diphosphate binding. Position 134 (histidine 134) interacts with isopentenyl diphosphate. Residue glutamate 136 is the Proton donor of the active site. A (2E)-4-hydroxy-3-methylbut-2-enyl diphosphate-binding site is contributed by threonine 174. Residue cysteine 204 participates in [4Fe-4S] cluster binding. Residues serine 232, serine 233, asparagine 234, and serine 276 each coordinate (2E)-4-hydroxy-3-methylbut-2-enyl diphosphate. 4 residues coordinate dimethylallyl diphosphate: serine 232, serine 233, asparagine 234, and serine 276. The isopentenyl diphosphate site is built by serine 232, serine 233, asparagine 234, and serine 276.

It belongs to the IspH family. The cofactor is [4Fe-4S] cluster.

It carries out the reaction isopentenyl diphosphate + 2 oxidized [2Fe-2S]-[ferredoxin] + H2O = (2E)-4-hydroxy-3-methylbut-2-enyl diphosphate + 2 reduced [2Fe-2S]-[ferredoxin] + 2 H(+). The enzyme catalyses dimethylallyl diphosphate + 2 oxidized [2Fe-2S]-[ferredoxin] + H2O = (2E)-4-hydroxy-3-methylbut-2-enyl diphosphate + 2 reduced [2Fe-2S]-[ferredoxin] + 2 H(+). Its pathway is isoprenoid biosynthesis; dimethylallyl diphosphate biosynthesis; dimethylallyl diphosphate from (2E)-4-hydroxy-3-methylbutenyl diphosphate: step 1/1. The protein operates within isoprenoid biosynthesis; isopentenyl diphosphate biosynthesis via DXP pathway; isopentenyl diphosphate from 1-deoxy-D-xylulose 5-phosphate: step 6/6. Catalyzes the conversion of 1-hydroxy-2-methyl-2-(E)-butenyl 4-diphosphate (HMBPP) into a mixture of isopentenyl diphosphate (IPP) and dimethylallyl diphosphate (DMAPP). Acts in the terminal step of the DOXP/MEP pathway for isoprenoid precursor biosynthesis. This chain is 4-hydroxy-3-methylbut-2-enyl diphosphate reductase, found in Bordetella parapertussis (strain 12822 / ATCC BAA-587 / NCTC 13253).